A 1153-amino-acid chain; its full sequence is Stress response protein nst1 (1153 aa).

Disordered regions lie at residues 1–212 (MVPA…TSTQ), 288–364 (QGSF…DEET), 421–467 (ESLH…EQRM), and 507–941 (MEEE…TQRD). Over residues 11–30 (SSSTMPNSSSTTAHSAPTTN) the composition is skewed to low complexity. Positions 53-63 (NRKKQKRRQKQ) are enriched in basic residues. The span at 64-73 (AARLAERQLA) shows a compositional bias: low complexity. Polar residues predominate over residues 76–90 (HVSTDDATQNGSSHT). Composition is skewed to basic and acidic residues over residues 91-109 (NPER…DHEQ) and 116-128 (YPKD…EAHI). Residues 129 to 140 (DSQNPQGPNGTE) show a composition bias toward polar residues. Residues 146-160 (TGRKSKKKKGKKGRN) show a composition bias toward basic residues. The span at 169-182 (TSTPMSTPSVSMSH) shows a compositional bias: low complexity. Polar residues predominate over residues 312-321 (GQHTRTQGQF). Composition is skewed to acidic residues over residues 332 to 363 (TEDD…EDEE) and 433 to 462 (DDED…DAMT). The stretch at 447 to 658 (SQEEEDYEED…EQQAKKDTAK (212 aa)) forms a coiled coil. Basic and acidic residues-rich tracts occupy residues 507–526 (MEEE…EAQK) and 536–674 (QAKE…DQAK). A compositionally biased stretch (low complexity) spans 721-739 (RQPSQQDSHSSSPHSQAPS). The segment covering 740-769 (TDPSQASLSPRSMPVSQSSGVASGNSQQGQ) has biased composition (polar residues). Low complexity predominate over residues 913-925 (PISRPSPIKRPSS). Residues 931–941 (QKGDDRTTQRD) are compositionally biased toward basic and acidic residues.

The protein belongs to the NST1 family.

The protein localises to the cytoplasm. In terms of biological role, may act as a negative regulator of salt tolerance. The protein is Stress response protein nst1 (nst1) of Aspergillus fumigatus (strain ATCC MYA-4609 / CBS 101355 / FGSC A1100 / Af293) (Neosartorya fumigata).